The chain runs to 229 residues: UPF0758 protein Mbar_A2303 (229 aa).

One can recognise an MPN domain in the interval 106–228 (KVCSPKDVYT…YVSLKDEGFV (123 aa)). Zn(2+)-binding residues include His-177, His-179, and Asp-190. The JAMM motif signature appears at 177 to 190 (HNHPSGDPSPSRED).

This sequence belongs to the UPF0758 family.

This is UPF0758 protein Mbar_A2303 from Methanosarcina barkeri (strain Fusaro / DSM 804).